The following is a 175-amino-acid chain: Peptidyl-prolyl cis-trans isomerase B (175 aa).

The region spanning 3–172 (EQLYATLKTN…EDVVIESVVV (170 aa)) is the PPIase cyclophilin-type domain.

It belongs to the cyclophilin-type PPIase family.

The protein localises to the cytoplasm. It carries out the reaction [protein]-peptidylproline (omega=180) = [protein]-peptidylproline (omega=0). Inhibited by cyclosporin A (CsA). PPIases accelerate the folding of proteins. It catalyzes the cis-trans isomerization of proline imidic peptide bonds in oligopeptides. This is Peptidyl-prolyl cis-trans isomerase B (cypB) from Streptomyces anulatus (Streptomyces chrysomallus).